We begin with the raw amino-acid sequence, 160 residues long: Cyclic pyranopterin monophosphate synthase (160 aa).

Substrate-binding positions include 75 to 77 (MCH) and 116 to 117 (ME). The active site involves Asp131.

Belongs to the MoaC family. Homohexamer; trimer of dimers.

It carries out the reaction (8S)-3',8-cyclo-7,8-dihydroguanosine 5'-triphosphate = cyclic pyranopterin phosphate + diphosphate. It functions in the pathway cofactor biosynthesis; molybdopterin biosynthesis. Functionally, catalyzes the conversion of (8S)-3',8-cyclo-7,8-dihydroguanosine 5'-triphosphate to cyclic pyranopterin monophosphate (cPMP). This chain is Cyclic pyranopterin monophosphate synthase, found in Staphylococcus haemolyticus (strain JCSC1435).